The primary structure comprises 225 residues: Putative membrane protease YugP (225 aa).

His-95 is a binding site for Zn(2+). Glu-96 is an active-site residue. His-99 and His-103 together coordinate Zn(2+). 3 helical membrane-spanning segments follow: residues 116-138 (IFPV…MLLG), 140-162 (LNLI…ITLP), and 192-212 (VLSA…FELL).

The protein localises to the cell membrane. The polypeptide is Putative membrane protease YugP (yugP) (Bacillus subtilis (strain 168)).